Consider the following 413-residue polypeptide: uncharacterized protein (413 aa).

A signal peptide spans 1–20; sequence MRVIIVIMMVVFVVVGTSSG.

This is an uncharacterized protein from Archaeoglobus fulgidus (strain ATCC 49558 / DSM 4304 / JCM 9628 / NBRC 100126 / VC-16).